A 123-amino-acid polypeptide reads, in one-letter code: Large ribosomal subunit protein uL22 (123 aa).

It belongs to the universal ribosomal protein uL22 family. Part of the 50S ribosomal subunit.

This protein binds specifically to 23S rRNA; its binding is stimulated by other ribosomal proteins, e.g. L4, L17, and L20. It is important during the early stages of 50S assembly. It makes multiple contacts with different domains of the 23S rRNA in the assembled 50S subunit and ribosome. In terms of biological role, the globular domain of the protein is located near the polypeptide exit tunnel on the outside of the subunit, while an extended beta-hairpin is found that lines the wall of the exit tunnel in the center of the 70S ribosome. This is Large ribosomal subunit protein uL22 from Synechococcus sp. (strain JA-3-3Ab) (Cyanobacteria bacterium Yellowstone A-Prime).